Here is a 1009-residue protein sequence, read N- to C-terminus: Protein-tyrosine kinase 2-beta (1009 aa).

In terms of domain architecture, FERM spans 39–359 (RILKVCFYSN…GYCRLQGEHK (321 aa)). Ser-361, Ser-375, and Ser-399 each carry phosphoserine. Tyr-402 is subject to Phosphotyrosine; by autocatalysis. Residues 425 to 683 (VVLNRILGEG…ELVCSLSDIY (259 aa)) form the Protein kinase domain. Residues 431-439 (LGEGFFGEV), Lys-457, and 503-509 (ELYPYGE) contribute to the ATP site. The Proton acceptor role is filled by Asp-549. Phosphotyrosine occurs at positions 579, 580, and 722. The interval 702 to 725 (PKILEPTAFQEPPPKPSRPKYKHP) is disordered. The residue at position 762 (Ser-762) is a Phosphoserine. Phosphothreonine is present on Thr-765. The interval 801-1009 (KIKMRQVLDR…VANLAHPPAE (209 aa)) is interaction with TGFB1I1. Tyr-834 carries the post-translational modification Phosphotyrosine. Ser-839 carries the post-translational modification Phosphoserine. Thr-842 is subject to Phosphothreonine. Phosphotyrosine is present on Tyr-849. Position 866 is a phosphoserine (Ser-866). The focal adhesion targeting (FAT) stretch occupies residues 868–1009 (QPTANLDRTD…VANLAHPPAE (142 aa)). Tyr-881 is subject to Phosphotyrosine.

The protein belongs to the protein kinase superfamily. Tyr protein kinase family. FAK subfamily. In terms of assembly, homodimer, or homooligomer. Interacts with NPHP1, ASAP1, ASAP2, ARHGAP26, SKAP2 and TGFB1I1. The Tyr-402 phosphorylated form interacts with SRC (via SH2 domain) and SRC family members. Forms a signaling complex with EPHA1, LCK and phosphatidylinositol 3-kinase; upon activation by EFNA1. Interacts with GRB2 (via SH2 domain). Interacts with P53/TP53 and MDM2. Interacts with MYLK. Interacts with BCAR1. Interacts with RB1CC1. Interacts with RHOU. Interacts with VAV1. Interacts with PDPK1. Interacts with LPXN and PTPN12. Interacts with SIRPA and SH2D3C. Interacts (hypophosphorylated) with PXN. Interacts with ARHGAP10. Interacts with KCNA2. Phosphorylated on tyrosine residues in response to various stimuli that elevate the intracellular calcium concentration; this activation is indirect and may be mediated by production of reactive oxygen species (ROS). Tyr-402 is the major autophosphorylation site, but other kinases can also phosphorylate Tyr-402. Autophosphorylation occurs in trans, i.e. one subunit of the dimeric receptor phosphorylates tyrosine residues on the other subunit. Phosphorylation at Tyr-402 promotes interaction with SRC and SRC family members, leading to phosphorylation at Tyr-579; Tyr-580 and Tyr-881. Phosphorylation at Tyr-881 is important for interaction with GRB2. Phosphorylated on tyrosine residues upon activation of FGR and PKC. Recruitment by NPHP1 to cell matrix adhesions initiates Tyr-402 phosphorylation. In monocytes, adherence to substrata is required for tyrosine phosphorylation and kinase activation. Angiotensin II, thapsigargin and L-alpha-lysophosphatidic acid (LPA) also induce autophosphorylation and increase kinase activity. Phosphorylation by MYLK promotes ITGB2 activation and is thus essential to trigger neutrophil transmigration during lung injury. Dephosphorylated by PTPN12. In terms of tissue distribution, highly expressed in pulmonary vein endothelial cells, lung and brain (at protein level). Isoform 1 is expressed at high levels in the brain (hippocampus, cerebral cortex and olfactory bulb) and poorly in the spleen and other tissues, whereas isoforms 2 and 3 are expressed in the spleen and brain (highest in cerebellum).

Its subcellular location is the cytoplasm. It localises to the perinuclear region. The protein resides in the cell membrane. It is found in the cell projection. The protein localises to the lamellipodium. Its subcellular location is the cell cortex. It localises to the nucleus. The protein resides in the cell junction. It is found in the focal adhesion. It catalyses the reaction L-tyrosyl-[protein] + ATP = O-phospho-L-tyrosyl-[protein] + ADP + H(+). Activated in response to stimuli that lead to increased intracellular Ca(2+) levels; this activation is indirect and may be mediated by calcium-mediated production of reactive oxygen species (ROS). Activated by autophosphorylation at Tyr-402; this creates a binding site for SRC family kinases and leads to phosphorylation at additional tyrosine residues. Phosphorylation at Tyr-402, Tyr-579 and Tyr-580 is required for optimal kinase activity. In terms of biological role, non-receptor protein-tyrosine kinase that regulates reorganization of the actin cytoskeleton, cell polarization, cell migration, adhesion, spreading and bone remodeling. Plays a role in the regulation of the humoral immune response, and is required for normal levels of marginal B-cells in the spleen and normal migration of splenic B-cells. Required for normal macrophage polarization and migration towards sites of inflammation. Regulates cytoskeleton rearrangement and cell spreading in T-cells, and contributes to the regulation of T-cell responses. Promotes osteoclastic bone resorption; this requires both PTK2B/PYK2 and SRC. May inhibit differentiation and activity of osteoprogenitor cells. Functions in signaling downstream of integrin and collagen receptors, immune receptors, G-protein coupled receptors (GPCR), cytokine, chemokine and growth factor receptors, and mediates responses to cellular stress. Forms multisubunit signaling complexes with SRC and SRC family members upon activation; this leads to the phosphorylation of additional tyrosine residues, creating binding sites for scaffold proteins, effectors and substrates. Regulates numerous signaling pathways. Promotes activation of phosphatidylinositol 3-kinase and of the AKT1 signaling cascade. Promotes activation of NOS3. Regulates production of the cellular messenger cGMP. Promotes activation of the MAP kinase signaling cascade, including activation of MAPK1/ERK2, MAPK3/ERK1 and MAPK8/JNK1. Promotes activation of Rho family GTPases, such as RHOA and RAC1. Recruits the ubiquitin ligase MDM2 to P53/TP53 in the nucleus, and thereby regulates P53/TP53 activity, P53/TP53 ubiquitination and proteasomal degradation. Acts as a scaffold, binding to both PDPK1 and SRC, thereby allowing SRC to phosphorylate PDPK1 at 'Tyr-9, 'Tyr-373', and 'Tyr-376'. Promotes phosphorylation of NMDA receptors by SRC family members, and thereby contributes to the regulation of NMDA receptor ion channel activity and intracellular Ca(2+) levels. May also regulate potassium ion transport by phosphorylation of potassium channel subunits. Phosphorylates SRC; this increases SRC kinase activity. Phosphorylates ASAP1, NPHP1, KCNA2 and SHC1. Promotes phosphorylation of ASAP2, RHOU and PXN; this requires both SRC and PTK2/PYK2. The chain is Protein-tyrosine kinase 2-beta (Ptk2b) from Rattus norvegicus (Rat).